The chain runs to 96 residues: Putative pterin-4-alpha-carbinolamine dehydratase (96 aa).

This sequence belongs to the pterin-4-alpha-carbinolamine dehydratase family.

The enzyme catalyses (4aS,6R)-4a-hydroxy-L-erythro-5,6,7,8-tetrahydrobiopterin = (6R)-L-erythro-6,7-dihydrobiopterin + H2O. This chain is Putative pterin-4-alpha-carbinolamine dehydratase, found in Prochlorococcus marinus (strain MIT 9515).